The primary structure comprises 152 residues: MYPAHLLVLLAVCVSLLGASNIPLPSLDFEQFGKMIQCTIPCEESCLAYMDYGCYCGPGGSGTPSDELDRCCQTHDNCYAEAGKLPACKAMLSEPYNDTYSYSCIERQLTCNDDNDECKAFICNCDRAAVICFSGAPYNDSNYDIGTIEHCK.

Positions 1–19 are cleaved as a signal peptide; that stretch reads MYPAHLLVLLAVCVSLLGA. A propeptide spanning residues 20–27 is cleaved from the precursor; sequence SNIPLPSL. 7 cysteine pairs are disulfide-bonded: Cys-38/Cys-104, Cys-54/Cys-151, Cys-56/Cys-72, Cys-71/Cys-132, Cys-78/Cys-125, Cys-88/Cys-118, and Cys-111/Cys-123. Residues Tyr-55, Gly-57, and Gly-59 each contribute to the Ca(2+) site. Residue His-75 is part of the active site. Residue Asp-76 coordinates Ca(2+). The active site involves Asp-126.

The protein belongs to the phospholipase A2 family. Group I subfamily. D49 sub-subfamily. The cofactor is Ca(2+). Expressed by the venom gland.

The protein localises to the secreted. The catalysed reaction is a 1,2-diacyl-sn-glycero-3-phosphocholine + H2O = a 1-acyl-sn-glycero-3-phosphocholine + a fatty acid + H(+). Snake venom phospholipase A2 (PLA2) that inhibits collagen-induced platelet aggregation. PLA2 catalyzes the calcium-dependent hydrolysis of the 2-acyl groups in 3-sn-phosphoglycerides. This Austrelaps superbus (Lowland copperhead snake) protein is Acidic phospholipase A2 S17-58.